A 72-amino-acid chain; its full sequence is UPF0352 protein HI_0840 (72 aa).

This sequence belongs to the UPF0352 family.

This is UPF0352 protein HI_0840 from Haemophilus influenzae (strain ATCC 51907 / DSM 11121 / KW20 / Rd).